The sequence spans 273 residues: Dermonecrotic toxin LapSicTox-alphaIB2 (273 aa).

The active site involves histidine 5. Residues glutamate 25 and aspartate 27 each contribute to the Mg(2+) site. The active-site Nucleophile is the histidine 41. 2 cysteine pairs are disulfide-bonded: cysteine 45–cysteine 51 and cysteine 47–cysteine 190. Aspartate 85 contacts Mg(2+). A glycan (N-linked (GlcNAc...) asparagine) is linked at asparagine 250.

This sequence belongs to the arthropod phospholipase D family. Class II subfamily. The cofactor is Mg(2+). Expressed by the venom gland.

Its subcellular location is the secreted. It catalyses the reaction an N-(acyl)-sphingosylphosphocholine = an N-(acyl)-sphingosyl-1,3-cyclic phosphate + choline. It carries out the reaction an N-(acyl)-sphingosylphosphoethanolamine = an N-(acyl)-sphingosyl-1,3-cyclic phosphate + ethanolamine. The catalysed reaction is a 1-acyl-sn-glycero-3-phosphocholine = a 1-acyl-sn-glycero-2,3-cyclic phosphate + choline. The enzyme catalyses a 1-acyl-sn-glycero-3-phosphoethanolamine = a 1-acyl-sn-glycero-2,3-cyclic phosphate + ethanolamine. Functionally, dermonecrotic toxins cleave the phosphodiester linkage between the phosphate and headgroup of certain phospholipids (sphingolipid and lysolipid substrates), forming an alcohol (often choline) and a cyclic phosphate. This toxin acts on sphingomyelin (SM). It may also act on ceramide phosphoethanolamine (CPE), lysophosphatidylcholine (LPC) and lysophosphatidylethanolamine (LPE), but not on lysophosphatidylserine (LPS), and lysophosphatidylglycerol (LPG). It acts by transphosphatidylation, releasing exclusively cyclic phosphate products as second products. Induces dermonecrosis, hemolysis, increased vascular permeability, edema, inflammatory response, and platelet aggregation. The protein is Dermonecrotic toxin LapSicTox-alphaIB2 of Loxosceles apachea (Apache recluse spider).